The sequence spans 171 residues: Neuronal vesicle trafficking-associated protein 2 (171 aa).

The tract at residues 1 to 21 (MVKLNGNPGEKGAKPPSVEDG) is disordered. The Cytoplasmic portion of the chain corresponds to 1–71 (MVKLNGNPGE…FRVPKIAEFT (71 aa)). The chain crosses the membrane as a helical; Signal-anchor for type II membrane protein span at residues 72-92 (VTILVSLALAFLACIVFLVVY). Residues 93–171 (KAFTYDHSCP…EPKPPKTQGH (79 aa)) are Lumenal-facing.

Belongs to the NSG family.

It localises to the membrane. Its subcellular location is the golgi apparatus. The protein localises to the trans-Golgi network membrane. It is found in the cell projection. The protein resides in the dendrite. It localises to the endosome membrane. Its subcellular location is the early endosome membrane. The protein localises to the late endosome membrane. It is found in the lysosome lumen. The protein resides in the cytoplasmic vesicle membrane. It localises to the golgi stack membrane. Its subcellular location is the endosome. The protein localises to the multivesicular body membrane. This chain is Neuronal vesicle trafficking-associated protein 2, found in Rattus norvegicus (Rat).